The sequence spans 332 residues: Invasin IpaD (332 aa).

Residues 1–25 (MNITTLTNSISTSSFSPNNTNGSST) are compositionally biased toward low complexity. The tract at residues 1-43 (MNITTLTNSISTSSFSPNNTNGSSTETVNSDIKTTTSSHPVSS) is disordered. Positions 26-43 (ETVNSDIKTTTSSHPVSS) are enriched in polar residues. The stretch at 44–77 (LTMLNDTLHNIRTTNQALKKELSQKTLTKTSLEE) forms a coiled coil. The tract at residues 192-267 (VNSLKKALEE…KSLDNLGGNG (76 aa)) is ipaB binding.

It belongs to the invasin protein D family.

It localises to the secreted. Functionally, required for bacterial invasion of host cells. Controls IpaB and IpaC secretion, and the efficiency with which they are physically inserted into target cell membranes. These proteins are exported via T3SS to form a pore in the host membrane that allows the translocation of the other effectors into the host cytoplasm. Along with IpaB, is essential for both blocking secretion through the Mxi/Spa translocon in the absence of a secretion-inducing signal, and for controlling the level of secretion in the presence of this signal. This chain is Invasin IpaD (ipaD), found in Shigella flexneri.